Consider the following 664-residue polypeptide: Macoilin (664 aa).

4 helical membrane passes run T28–L48, A75–I95, V120–F140, and F154–V174. Basic and acidic residues predominate over residues R253–K265. Residues R253 to N274 are disordered. S305 is subject to Phosphoserine. Polar residues predominate over residues K320–S348. Residues K320–N375 form a disordered region. Residue N324 is glycosylated (N-linked (GlcNAc...) asparagine). S332 is modified (phosphoserine). N-linked (GlcNAc...) asparagine glycans are attached at residues N340 and N452. The tract at residues T630–K664 is disordered. Phosphoserine is present on residues S631 and S634. An N-linked (GlcNAc...) asparagine glycan is attached at N655.

This sequence belongs to the macoilin family.

Its subcellular location is the rough endoplasmic reticulum membrane. The protein resides in the nucleus membrane. In terms of biological role, plays a role in the regulation of neuronal activity. The sequence is that of Macoilin (MACO1) from Macaca mulatta (Rhesus macaque).